The following is a 296-amino-acid chain: Pseudouridine-5'-phosphate glycosidase (296 aa).

Glu-21 (proton donor) is an active-site residue. Residues Lys-81 and Val-101 each coordinate substrate. Asp-130 serves as a coordination point for Mn(2+). Position 132–134 (132–134) interacts with substrate; that stretch reads SQD. Lys-151 (nucleophile) is an active-site residue.

It belongs to the pseudouridine-5'-phosphate glycosidase family. Homotrimer. Mn(2+) serves as cofactor.

It carries out the reaction D-ribose 5-phosphate + uracil = psi-UMP + H2O. Catalyzes the reversible cleavage of pseudouridine 5'-phosphate (PsiMP) to ribose 5-phosphate and uracil. Functions biologically in the cleavage direction, as part of a pseudouridine degradation pathway. The chain is Pseudouridine-5'-phosphate glycosidase from Fervidobacterium nodosum (strain ATCC 35602 / DSM 5306 / Rt17-B1).